The sequence spans 169 residues: S-ribosylhomocysteine lyase (169 aa).

Residues His-54, His-58, and Cys-128 each contribute to the Fe cation site.

The protein belongs to the LuxS family. Homodimer. It depends on Fe cation as a cofactor.

The enzyme catalyses S-(5-deoxy-D-ribos-5-yl)-L-homocysteine = (S)-4,5-dihydroxypentane-2,3-dione + L-homocysteine. Involved in the synthesis of autoinducer 2 (AI-2) which is secreted by bacteria and is used to communicate both the cell density and the metabolic potential of the environment. The regulation of gene expression in response to changes in cell density is called quorum sensing. Catalyzes the transformation of S-ribosylhomocysteine (RHC) to homocysteine (HC) and 4,5-dihydroxy-2,3-pentadione (DPD). In Shewanella piezotolerans (strain WP3 / JCM 13877), this protein is S-ribosylhomocysteine lyase.